The primary structure comprises 224 residues: Ribonuclease 3 (224 aa).

The region spanning isoleucine 4–glycine 127 is the RNase III domain. Residue glutamate 40 participates in Mg(2+) binding. The active site involves aspartate 44. Residues aspartate 113 and glutamate 116 each contribute to the Mg(2+) site. Glutamate 116 is an active-site residue. The DRBM domain occupies aspartate 154 to alanine 223.

It belongs to the ribonuclease III family. Homodimer. It depends on Mg(2+) as a cofactor.

Its subcellular location is the cytoplasm. It carries out the reaction Endonucleolytic cleavage to 5'-phosphomonoester.. In terms of biological role, digests double-stranded RNA. Involved in the processing of primary rRNA transcript to yield the immediate precursors to the large and small rRNAs (23S and 16S). Processes some mRNAs, and tRNAs when they are encoded in the rRNA operon. Processes pre-crRNA and tracrRNA of type II CRISPR loci if present in the organism. The chain is Ribonuclease 3 from Campylobacter jejuni subsp. jejuni serotype O:6 (strain 81116 / NCTC 11828).